We begin with the raw amino-acid sequence, 153 residues long: Transcriptional repressor NrdR 2 (153 aa).

The segment at 3–34 (CPFCGQDDTQVKDSRPTDDNAAIRRRRACPGC) is a zinc-finger region. One can recognise an ATP-cone domain in the interval 49-139 (LVVVKKDGSR…VYRNFREAKD (91 aa)).

The protein belongs to the NrdR family. It depends on Zn(2+) as a cofactor.

Its function is as follows. Negatively regulates transcription of bacterial ribonucleotide reductase nrd genes and operons by binding to NrdR-boxes. The polypeptide is Transcriptional repressor NrdR 2 (Paramagnetospirillum magneticum (strain ATCC 700264 / AMB-1) (Magnetospirillum magneticum)).